Here is a 79-residue protein sequence, read N- to C-terminus: Small ribosomal subunit protein uS17 (79 aa).

The protein belongs to the universal ribosomal protein uS17 family. As to quaternary structure, part of the 30S ribosomal subunit.

In terms of biological role, one of the primary rRNA binding proteins, it binds specifically to the 5'-end of 16S ribosomal RNA. The chain is Small ribosomal subunit protein uS17 from Orientia tsutsugamushi (strain Boryong) (Rickettsia tsutsugamushi).